A 172-amino-acid chain; its full sequence is 3-hydroxydecanoyl-[acyl-carrier-protein] dehydratase (172 aa).

Residue His71 is part of the active site.

The protein belongs to the thioester dehydratase family. FabA subfamily. In terms of assembly, homodimer.

The protein resides in the cytoplasm. The catalysed reaction is a (3R)-hydroxyacyl-[ACP] = a (2E)-enoyl-[ACP] + H2O. The enzyme catalyses (3R)-hydroxydecanoyl-[ACP] = (2E)-decenoyl-[ACP] + H2O. It catalyses the reaction (2E)-decenoyl-[ACP] = (3Z)-decenoyl-[ACP]. It participates in lipid metabolism; fatty acid biosynthesis. In terms of biological role, necessary for the introduction of cis unsaturation into fatty acids. Catalyzes the dehydration of (3R)-3-hydroxydecanoyl-ACP to E-(2)-decenoyl-ACP and then its isomerization to Z-(3)-decenoyl-ACP. Can catalyze the dehydratase reaction for beta-hydroxyacyl-ACPs with saturated chain lengths up to 16:0, being most active on intermediate chain length. This Klebsiella pneumoniae subsp. pneumoniae (strain ATCC 700721 / MGH 78578) protein is 3-hydroxydecanoyl-[acyl-carrier-protein] dehydratase.